Reading from the N-terminus, the 846-residue chain is Protein kintoun (846 aa).

Disordered stretches follow at residues 1–21 (MSTA…ERAD), 372–416 (YLSR…PALT), 581–657 (HTSI…DSTI), and 743–846 (HDSS…DDEI). Ser378 carries the phosphoserine modification. The span at 389–403 (PVEDDADGDMPETPE) shows a compositional bias: acidic residues. Basic residues-rich tracts occupy residues 596–612 (LHKK…KKQR) and 750–766 (QRKK…RAQQ). Ser770 carries the phosphoserine modification. Over residues 821–832 (TRQDHADADAKN) the composition is skewed to basic and acidic residues.

This sequence belongs to the PIH1 family. Kintoun subfamily. Interacts with Pp1alpha-96A, Pp1-87B, Pp1-13C and flw.

It localises to the cytoplasm. Required for cytoplasmic pre-assembly of axonemal dyneins, thereby playing a central role in motility in cilia and flagella. Involved in pre-assembly of dynein arm complexes in the cytoplasm before intraflagellar transport loads them for the ciliary compartment. The protein is Protein kintoun of Drosophila persimilis (Fruit fly).